The sequence spans 174 residues: DNA-directed RNA polymerase IV subunit 7 (174 aa).

This sequence belongs to the eukaryotic RPB7/RPC8 RNA polymerase subunit family. As to quaternary structure, component of the RNA polymerase IV complex. Interacts with NRPD1.

It localises to the nucleus. In terms of biological role, DNA-dependent RNA polymerase catalyzes the transcription of DNA into RNA using the four ribonucleoside triphosphates as substrates. Component of RNA polymerase IV which mediates 24-nt short-interfering RNAs (siRNA) accumulation. Implicated in siRNA-directed heterochromatin formation through the action of DCL3 and AGO4, and subsequent DNA methylation-dependent silencing of targeted sequences. Essential component of a self-reinforcing loop coupling de novo DNA methylation to siRNA production. Required for intercellular but not intracellular RNA interference (RNAi) leading to systemic post-transcriptional gene silencing. Involved in the maintenance of post-transcriptional RNA silencing. The protein is DNA-directed RNA polymerase IV subunit 7 (NRPD7) of Arabidopsis thaliana (Mouse-ear cress).